A 280-amino-acid polypeptide reads, in one-letter code: Cell division control protein 2 homolog B (280 aa).

ATP contacts are provided by residues 1-5 (AYGVV) and K20. The Protein kinase domain maps to 1–274 (AYGVVYKARD…AKKALEHEYF (274 aa)). Y2 carries the post-translational modification Phosphotyrosine. The active-site Proton acceptor is the D114. The residue at position 148 (T148) is a Phosphothreonine; by CAK.

It belongs to the protein kinase superfamily. CMGC Ser/Thr protein kinase family. CDC2/CDKX subfamily.

It catalyses the reaction L-seryl-[protein] + ATP = O-phospho-L-seryl-[protein] + ADP + H(+). It carries out the reaction L-threonyl-[protein] + ATP = O-phospho-L-threonyl-[protein] + ADP + H(+). The catalysed reaction is [DNA-directed RNA polymerase] + ATP = phospho-[DNA-directed RNA polymerase] + ADP + H(+). Phosphorylation at Tyr-2 inactivates the enzyme, while phosphorylation at Thr-148 activates it. Functionally, plays a key role in the control of the eukaryotic cell cycle. The protein is Cell division control protein 2 homolog B (CDC2B) of Antirrhinum majus (Garden snapdragon).